Reading from the N-terminus, the 774-residue chain is Fe(3+) dicitrate transport protein FecA (774 aa).

A signal peptide spans Met1–Ala33. Residues Phe56–Ser63 carry the TonB box motif. The region spanning Asp129 to Arg250 is the TBDR plug domain. The TBDR beta-barrel domain occupies Asp255–Phe774. The TonB C-terminal box signature appears at Gly757–Phe774.

This sequence belongs to the TonB-dependent receptor family. As to quaternary structure, interacts (via periplasmic N-terminus) with FecR (via periplasmic C-terminus).

The protein localises to the cell outer membrane. Functionally, fecA is the outer membrane receptor protein in the Fe(3+) dicitrate transport system. The chain is Fe(3+) dicitrate transport protein FecA (fecA) from Escherichia coli (strain K12).